The sequence spans 352 residues: tRNA pseudouridine synthase D (352 aa).

The active-site Nucleophile is aspartate 81. The 149-residue stretch at 158–306 folds into the TRUD domain; sequence GVPNYFGQQR…RHERRTLLLK (149 aa).

The protein belongs to the pseudouridine synthase TruD family.

It carries out the reaction uridine(13) in tRNA = pseudouridine(13) in tRNA. Functionally, responsible for synthesis of pseudouridine from uracil-13 in transfer RNAs. The protein is tRNA pseudouridine synthase D of Photobacterium profundum (strain SS9).